A 626-amino-acid polypeptide reads, in one-letter code: Elongation factor 4 (626 aa).

The region spanning 14–195 (SLIRNFCIIA…RIVVDVPAPT (182 aa)) is the tr-type G domain. GTP is bound by residues 26–31 (DHGKST) and 142–145 (NKID). Residues 603–626 (LSTGEGGNDRDTKDKIRAAQKSEG) form a disordered region. Basic and acidic residues predominate over residues 609 to 626 (GNDRDTKDKIRAAQKSEG).

Belongs to the TRAFAC class translation factor GTPase superfamily. Classic translation factor GTPase family. LepA subfamily.

Its subcellular location is the cell membrane. The catalysed reaction is GTP + H2O = GDP + phosphate + H(+). Required for accurate and efficient protein synthesis under certain stress conditions. May act as a fidelity factor of the translation reaction, by catalyzing a one-codon backward translocation of tRNAs on improperly translocated ribosomes. Back-translocation proceeds from a post-translocation (POST) complex to a pre-translocation (PRE) complex, thus giving elongation factor G a second chance to translocate the tRNAs correctly. Binds to ribosomes in a GTP-dependent manner. This is Elongation factor 4 from Bifidobacterium animalis subsp. lactis (strain AD011).